Here is a 358-residue protein sequence, read N- to C-terminus: Acyl-CoA Delta-12 desaturase (358 aa).

2 helical membrane passes run 30–50 (IILYIIMHLTGFYGLYLAMFY) and 55–75 (TVFYSWFLLVIALQGVTAGSH). Positions 75, 80, 112, 115, and 116 each coordinate Fe cation. The Histidine box-1 motif lies at 75 to 80 (HRLWAH). The Histidine box-2 motif lies at 112 to 116 (HRVHH). 2 helical membrane-spanning segments follow: residues 175–195 (TFFAPVIGFYLPAAIPWYFWG) and 200–220 (TAFFVATMLRYCACTNITFLV). The Fe cation site is built by His225, His254, His257, and His258. The short motif at 254-258 (HNYHH) is the Histidine box-3 element.

Belongs to the fatty acid desaturase type 1 family. Requires Fe(2+) as cofactor.

It is found in the membrane. The enzyme catalyses (9Z)-octadecenoyl-CoA + 2 Fe(II)-[cytochrome b5] + O2 + 2 H(+) = (9Z,12Z)-octadecadienoyl-CoA + 2 Fe(III)-[cytochrome b5] + 2 H2O. It carries out the reaction (9Z)-hexadecenoyl-CoA + 2 Fe(II)-[cytochrome b5] + O2 + 2 H(+) = (9Z,12Z)-hexadecadienoyl-CoA + 2 Fe(III)-[cytochrome b5] + 2 H2O. Catalyzes the formation of a Delta12 double bond, acting on monounsaturated fatty acyl substrates like palmitoleoyl-CoA ((9Z)-hexadecenoyl-CoA) and oleoyl-CoA ((9Z)-octadecenoyl-CoA) with higher desaturation activity on (9Z)-octadecenoyl-CoA than (9Z)-hexadecenoyl-CoA. Requires preexisting cis double bond at the Delta9 position of fatty acyls to be able to insert the Delta12 double bond. Delta12-desaturation of (9Z)-octadecenoyl-CoA in insects produces (9Z,12Z)-octadecadienoyl-CoA (linoleoyl-CoA) which may be used to supply precursors of crucial mediators of immunity and reproduction and other essential functions. The chain is Acyl-CoA Delta-12 desaturase from Tribolium castaneum (Red flour beetle).